The sequence spans 212 residues: uncharacterized protein (212 aa).

Positions 1–88 (MAEEQKIALE…PAPAKPASAS (88 aa)) are disordered. Serine 13 is modified (phosphoserine). Pro residues predominate over residues 23 to 41 (ADTPAPAPAEIPAPAPAPT). A compositionally biased stretch (basic and acidic residues) spans 45–54 (VTKDVAEEKI).

This sequence belongs to the remorin family.

It localises to the cell membrane. This is an uncharacterized protein from Arabidopsis thaliana (Mouse-ear cress).